The chain runs to 883 residues: MNYFSLTSHKKHRGHPSAGPSNAYQNLEKTSVLQETRTFNETPVNPRKCIHILTKILYLINQGEQLVAREATDCFFAMTKLFQSKDVVLRRMVYLGIKELSSIAEDVIIVTSSLTKDMTGKEDLYRAAAIRALCSITDNTMLQAVERYMKQCIVDKNAAVSCAALVSSLRLANTAGDVVKRWANEAQEALNSDNIMVQYHALGLLYHIRKSDRLAVSKLVNKLTRGSLKSPYAVCMLIRIACKLIEEEDIPSEELSDSPLFTFIESCLRHKSEMVIYEAAHAIVNLKNTNPRMLSPAFSILQLFCSSPKATLRFAAVRTLNKVAMTHPAAVTTCNLDLEGLITDSNRSVATLAITTLLKTGAESSVERLMKQISTFVAEISDEFKVVVVQAICALCTKYPRKHTVLMNFLSGMLREEGGLEYKTSIVDTIITIIEENADAKESGLSHLCEFIEDCEHVSLAVRILHLLGKEGPFAATPSKYIRFIYNRVILESPIVRAAAVTAMAQFGASCPALLSNILVLLGRCQMDPDDEVRDRATYYLSILNSERPELYKNYIIERENCSLALLEKSLVEHLNGDVDTRFDISIVPKAAIVKPVIANDVMLVTSSAPRPPKITREEESAARLAQLPGIQVLGPIHRSTAPIQLTESETEYTVQCIKHIFGQHVVFQFDCLNTLSDQILENVRVELTLPEGFTTRAVIPCPKLPYNDLQTTFVIVEFPPDAANSIATFGATLRFVVKDCDPNTGEPESEEGYDDEYMLEDLELTVADQIQKTRKNNFQVSWDAADSEEWLQAEDTFVLSAVTTLQDAVNTIVKILGLGAANLSENVPEGTHLHTLLCSGTFRGGAEILVRAKLALSEGVTLNLTVRSTDQDVAELITAAIG.

Residues 1–25 form a disordered region; that stretch reads MNYFSLTSHKKHRGHPSAGPSNAYQ. HEAT repeat units lie at residues 69-106, 292-329, 331-364, 365-401, 404-439, and 476-513; these read REAT…IAED, RMLS…THPA, VTTC…GAES, SVER…KYPR, TVLM…ENAD, and ATPS…SCPA.

It belongs to the COPG family. As to quaternary structure, oligomeric complex that consists of at least the alpha, beta, beta', gamma, delta, epsilon and zeta subunits. As to expression, expressed in ovary, testis, testis tip, young spermatocytes, germ cells and follicle cells. Up-regulated expression within centrally to posteriorly located germarial cysts and in migrating follicle cells. Widespread expression in imaginal disks including eye-antennal disk, wing disk, third leg and haltere disk.

The protein localises to the cytoplasm. It localises to the golgi apparatus membrane. It is found in the cytoplasmic vesicle. Its subcellular location is the COPI-coated vesicle membrane. The protein resides in the endoplasmic reticulum. Functionally, the coatomer is a cytosolic protein complex that binds to dilysine motifs and reversibly associates with Golgi non-clathrin-coated vesicles, which further mediate biosynthetic protein transport from the ER, via the Golgi up to the trans Golgi network. Coatomer complex is required for budding from Golgi membranes, and is essential for the retrograde Golgi-to-ER transport of dilysine-tagged proteins. Required for limiting lipid storage in lipid droplets. Involved in the expansion of luminal extracellular matrices and apical membrane during tubulogenesis. Required in the tracheal epithelium for luminal protein secretion and diametric tube growth. In salivary glands, required for deposition of O-glycans and luminal extracellular matrix assembly. Required for epidermal morphogenesis and cuticle development. This Drosophila melanogaster (Fruit fly) protein is Coatomer subunit gamma.